A 93-amino-acid polypeptide reads, in one-letter code: Alpha-defensin 24 (93 aa).

The signal sequence occupies residues 1-19; the sequence is MKTLILLSALVLLAFQVQA. The propeptide occupies 20 to 58; that stretch reads DPIQNTDEETKTEEQPGEEDQAVSVSFGDPEGASLQEES. The interval 23–54 is disordered; that stretch reads QNTDEETKTEEQPGEEDQAVSVSFGDPEGASL. Intrachain disulfides connect Cys64-Cys92, Cys66-Cys81, and Cys71-Cys91.

This sequence belongs to the alpha-defensin family.

The protein resides in the secreted. Functionally, may have microbicidal activities. The polypeptide is Alpha-defensin 24 (Defa24) (Mus musculus (Mouse)).